Consider the following 151-residue polypeptide: UPF0178 protein Shal_3046 (151 aa).

It belongs to the UPF0178 family.

The protein is UPF0178 protein Shal_3046 of Shewanella halifaxensis (strain HAW-EB4).